A 159-amino-acid chain; its full sequence is uncharacterized protein (159 aa).

The N-acetyltransferase domain occupies Ile-4 to Cys-153.

It belongs to the acetyltransferase family.

This is an uncharacterized protein from Escherichia coli (strain K12).